The sequence spans 795 residues: Serine/threonine-protein kinase MARK1 (795 aa).

The disordered stretch occupies residues 1–41; the sequence is MSARTPLPTVNERDTENHTSVDGYTETHIPPAKSSSRQNLP. A Phosphothreonine modification is found at Thr-5. The Protein kinase domain maps to 60 to 311; sequence YRLQKTIGKG…LEQIMKDRWM (252 aa). Residues 66 to 74 and Lys-89 each bind ATP; that span reads IGKGNFAKV. Residue Asp-182 is the Proton acceptor of the active site. At Thr-208 the chain carries Phosphothreonine. A Phosphothreonine; by LKB1 and TAOK1 modification is found at Thr-215. Ser-219 is subject to Phosphoserine; by GSK3-beta. The UBA domain occupies 329–370; the sequence is DLSDAKRIDIMVTMGFARDEINDALVSQKYDEVMATYILLGR. 2 disordered regions span residues 377 to 498 and 518 to 699; these read GGES…SGGS and QNGR…KPRS. Ser-382, Ser-390, Ser-393, Ser-403, Ser-423, and Ser-444 each carry phosphoserine. The segment covering 387 to 403 has biased composition (polar residues); that stretch reads CQRSRPSSDLNNSTLQS. A compositionally biased stretch (basic and acidic residues) spans 447 to 459; sequence SEQKEEWGKDTAR. Residues 462-473 are compositionally biased toward polar residues; the sequence is GSTTVGSKSEVT. Phosphoserine is present on Ser-475. Positions 486–495 are enriched in polar residues; that stretch reads TASPSNNVYS. Composition is skewed to low complexity over residues 523 to 547 and 585 to 599; these read SSLTEMSASSMSSAGSTVASAGPSA and PAASPSAHSISASTP. At Ser-588 the chain carries Phosphoserine. The residue at position 613 (Thr-613) is a Phosphothreonine; by PKC/PRKCZ. A compositionally biased stretch (polar residues) spans 647–657; the sequence is GTSTGIISKIT. Composition is skewed to basic and acidic residues over residues 661-676 and 683-697; these read VRRDPSEGEASGRADT and DPKERDKDEGKEAKP. Ser-666 is subject to Phosphoserine. The KA1 domain maps to 746-795; the sequence is DARQDSLVQWEMEVCKLPRLSLNGVRFKRISGTSIAFKNIASKIANELKL.

This sequence belongs to the protein kinase superfamily. CAMK Ser/Thr protein kinase family. SNF1 subfamily. In terms of assembly, interacts with MAPT/TAU. The cofactor is Mg(2+). Phosphorylated at Thr-215 by STK11/LKB1 in complex with STE20-related adapter-alpha (STRADA) pseudo kinase and CAB39. Phosphorylation at Thr-215 by TAOK1 activates the kinase activity, leading to phosphorylation and detachment of MAPT/TAU from microtubules. Phosphorylation at Ser-219 by GSK3-beta (GSK3B) inhibits the kinase activity. Phosphorylation at Thr-613 by PRKCZ/aPKC in polarized epithelial cells inhibits the kinase activity.

It is found in the cell membrane. The protein localises to the cytoplasm. The protein resides in the cytoskeleton. It localises to the cell projection. Its subcellular location is the dendrite. It catalyses the reaction L-seryl-[protein] + ATP = O-phospho-L-seryl-[protein] + ADP + H(+). The enzyme catalyses L-threonyl-[protein] + ATP = O-phospho-L-threonyl-[protein] + ADP + H(+). The catalysed reaction is L-seryl-[tau protein] + ATP = O-phospho-L-seryl-[tau protein] + ADP + H(+). It carries out the reaction L-threonyl-[tau protein] + ATP = O-phospho-L-threonyl-[tau protein] + ADP + H(+). Inhibited by phosphorylation at Ser-219. Activated by phosphorylation on Thr-215. Its function is as follows. Serine/threonine-protein kinase. Involved in cell polarity and microtubule dynamics regulation. Phosphorylates DCX, MAP2 and MAP4. Phosphorylates the microtubule-associated protein MAPT/TAU. Involved in cell polarity by phosphorylating the microtubule-associated proteins MAP2, MAP4 and MAPT/TAU at KXGS motifs, causing detachment from microtubules, and their disassembly. Involved in the regulation of neuronal migration through its dual activities in regulating cellular polarity and microtubule dynamics, possibly by phosphorylating and regulating DCX. Also acts as a positive regulator of the Wnt signaling pathway, probably by mediating phosphorylation of dishevelled proteins (DVL1, DVL2 and/or DVL3). The sequence is that of Serine/threonine-protein kinase MARK1 from Mus musculus (Mouse).